A 551-amino-acid chain; its full sequence is Putative BTB/POZ domain-containing protein L76 (551 aa).

The BTB domain maps to 19 to 90 (TDIILEIEDD…FYGQENDVID (72 aa)).

It belongs to the mimivirus BTB/WD family.

The sequence is that of Putative BTB/POZ domain-containing protein L76 from Acanthamoeba polyphaga (Amoeba).